Reading from the N-terminus, the 240-residue chain is Ubiquinone biosynthesis O-methyltransferase (240 aa).

Positions 44, 64, 85, and 129 each coordinate S-adenosyl-L-methionine.

The protein belongs to the methyltransferase superfamily. UbiG/COQ3 family.

It catalyses the reaction a 3-demethylubiquinol + S-adenosyl-L-methionine = a ubiquinol + S-adenosyl-L-homocysteine + H(+). The enzyme catalyses a 3-(all-trans-polyprenyl)benzene-1,2-diol + S-adenosyl-L-methionine = a 2-methoxy-6-(all-trans-polyprenyl)phenol + S-adenosyl-L-homocysteine + H(+). It participates in cofactor biosynthesis; ubiquinone biosynthesis. In terms of biological role, O-methyltransferase that catalyzes the 2 O-methylation steps in the ubiquinone biosynthetic pathway. The protein is Ubiquinone biosynthesis O-methyltransferase of Escherichia coli (strain SMS-3-5 / SECEC).